A 297-amino-acid polypeptide reads, in one-letter code: Tyrosine recombinase XerD (297 aa).

The Core-binding (CB) domain occupies 2 to 86 (KKLDPIIEQF…CLRKFFRFLC (85 aa)). The region spanning 107-291 (QLPKSLSEEQ…AKTRLKSIHK (185 aa)) is the Tyr recombinase domain. Active-site residues include Arg147, Lys171, His243, Arg246, and His269. Tyr278 (O-(3'-phospho-DNA)-tyrosine intermediate) is an active-site residue.

Belongs to the 'phage' integrase family. XerD subfamily. Forms a cyclic heterotetrameric complex composed of two molecules of XerC and two molecules of XerD.

The protein localises to the cytoplasm. Functionally, site-specific tyrosine recombinase, which acts by catalyzing the cutting and rejoining of the recombining DNA molecules. The XerC-XerD complex is essential to convert dimers of the bacterial chromosome into monomers to permit their segregation at cell division. It also contributes to the segregational stability of plasmids. This chain is Tyrosine recombinase XerD, found in Haemophilus ducreyi (strain 35000HP / ATCC 700724).